The sequence spans 69 residues: U-scoloptoxin(21)-Sm2a (69 aa).

A signal peptide spans 1-21; sequence MFFLGFIIVCASEEQSDNRLP. Positions 46–69 are disordered; that stretch reads ANDPNGPGRRRRSPIVREEILRHP. The span at 60 to 69 shows a compositional bias: basic and acidic residues; the sequence is IVREEILRHP.

It belongs to the scoloptoxin-21 family. In terms of tissue distribution, expressed by the venom gland.

The protein resides in the secreted. The chain is U-scoloptoxin(21)-Sm2a from Scolopendra morsitans (Tanzanian blue ringleg centipede).